Here is a 413-residue protein sequence, read N- to C-terminus: 3-isopropylmalate dehydratase large subunit (413 aa).

3 residues coordinate [4Fe-4S] cluster: C295, C353, and C356.

This sequence belongs to the aconitase/IPM isomerase family. LeuC type 2 subfamily. In terms of assembly, heterodimer of LeuC and LeuD. It depends on [4Fe-4S] cluster as a cofactor.

It catalyses the reaction (2R,3S)-3-isopropylmalate = (2S)-2-isopropylmalate. It participates in amino-acid biosynthesis; L-leucine biosynthesis; L-leucine from 3-methyl-2-oxobutanoate: step 2/4. Its function is as follows. Catalyzes the isomerization between 2-isopropylmalate and 3-isopropylmalate, via the formation of 2-isopropylmaleate. The protein is 3-isopropylmalate dehydratase large subunit of Pyrobaculum calidifontis (strain DSM 21063 / JCM 11548 / VA1).